The chain runs to 306 residues: Serrate RNA effector molecule homolog (306 aa).

The tract at residues 1–28 is disordered; the sequence is HKEEELLGSSGGPPPEEPPKEGNPAEIN. The residue at position 101 (Thr101) is a Phosphothreonine. Ser109 is subject to Phosphoserine. The tract at residues 251–284 is disordered; it reads GPPYPHGPYGAGRGNYDAFRGQGGYPGKPRNRMV. Arg263, Arg270, and Arg280 each carry omega-N-methylarginine.

This sequence belongs to the ARS2 family. In terms of assembly, interacts with CASP8AP2, ERBB4, NCBP1/CBP80 and DROSHA. Interacts with LUZP4. Interacts with NCBP2/CBP20 and NCBP3.

Its subcellular location is the nucleus. It is found in the nucleoplasm. The protein localises to the cytoplasm. Acts as a mediator between the cap-binding complex (CBC) and the primary microRNAs (miRNAs) processing machinery during cell proliferation. Contributes to the stability and delivery of capped primary miRNA transcripts to the primary miRNA processing complex containing DGCR8 and DROSHA, thereby playing a role in RNA-mediated gene silencing (RNAi) by miRNAs. Binds capped RNAs (m7GpppG-capped RNA); however interaction is probably mediated via its interaction with NCBP1/CBP80 component of the CBC complex. Involved in cell cycle progression at S phase. Does not directly confer arsenite resistance but rather modulates arsenic sensitivity. Independently of its activity on miRNAs, necessary and sufficient to promote neural stem cell self-renewal. Does so by directly binding SOX2 promoter and positively regulating its transcription. This chain is Serrate RNA effector molecule homolog (SRRT), found in Cricetulus griseus (Chinese hamster).